We begin with the raw amino-acid sequence, 185 residues long: Ribosome-recycling factor (185 aa).

The protein belongs to the RRF family.

It is found in the cytoplasm. Responsible for the release of ribosomes from messenger RNA at the termination of protein biosynthesis. May increase the efficiency of translation by recycling ribosomes from one round of translation to another. The sequence is that of Ribosome-recycling factor from Buchnera aphidicola subsp. Acyrthosiphon pisum (strain APS) (Acyrthosiphon pisum symbiotic bacterium).